The sequence spans 217 residues: ATP-dependent Clp protease proteolytic subunit 2 (217 aa).

Ser-121 (nucleophile) is an active-site residue. The active site involves His-146.

Belongs to the peptidase S14 family. Fourteen ClpP subunits assemble into 2 heptameric rings which stack back to back to give a disk-like structure with a central cavity, resembling the structure of eukaryotic proteasomes.

It localises to the cytoplasm. The enzyme catalyses Hydrolysis of proteins to small peptides in the presence of ATP and magnesium. alpha-casein is the usual test substrate. In the absence of ATP, only oligopeptides shorter than five residues are hydrolyzed (such as succinyl-Leu-Tyr-|-NHMec, and Leu-Tyr-Leu-|-Tyr-Trp, in which cleavage of the -Tyr-|-Leu- and -Tyr-|-Trp bonds also occurs).. Its function is as follows. Cleaves peptides in various proteins in a process that requires ATP hydrolysis. Has a chymotrypsin-like activity. Plays a major role in the degradation of misfolded proteins. The protein is ATP-dependent Clp protease proteolytic subunit 2 of Paraburkholderia xenovorans (strain LB400).